A 57-amino-acid chain; its full sequence is Large ribosomal subunit protein bL32 (57 aa).

Basic residues predominate over residues 1–20 (MAVPKKKTSKTKRDQRKANW). A disordered region spans residues 1–21 (MAVPKKKTSKTKRDQRKANWK).

It belongs to the bacterial ribosomal protein bL32 family.

The polypeptide is Large ribosomal subunit protein bL32 (Rippkaea orientalis (strain PCC 8801 / RF-1) (Cyanothece sp. (strain PCC 8801))).